Here is a 215-residue protein sequence, read N- to C-terminus: MVLLQIIASQSYSIEVDEHSSLGNIFDLLSDQGILPKNAKSLHAFYYHGTRLNMNMTCADYGIIHDSAVHIAPLPSSCDIDFKDYSTSAFHLHFSPLTPNHASTEAVSNFKQSSTIPSISKSNLTNPPLESEKSSDKALLTRPATSRRRCCHPTCTRITLRLAGNCLHCNGRFCAAHRLMEDHDCVALFSLRKEEHERNRIKLEKEHGDTLISKV.

The segment covering 116-128 (IPSISKSNLTNPP) has biased composition (polar residues). Residues 116–138 (IPSISKSNLTNPPLESEKSSDKA) form a disordered region. An AN1-type zinc finger spans residues 144-193 (ATSRRRCCHPTCTRITLRLAGNCLHCNGRFCAAHRLMEDHDCVALFSLRK). 8 residues coordinate Zn(2+): C150, C155, C166, C169, C174, H177, H183, and C185.

It localises to the cytoplasm. Its subcellular location is the nucleus. The chain is AN1-type zinc finger protein C1271.05c from Schizosaccharomyces pombe (strain 972 / ATCC 24843) (Fission yeast).